The following is a 413-amino-acid chain: ORC1-type DNA replication protein 10 (413 aa).

Residues 63–67, tyrosine 211, and arginine 223 each bind ATP; that span reads VGKTA.

This sequence belongs to the CDC6/cdc18 family.

Involved in regulation of DNA replication. This is ORC1-type DNA replication protein 10 (orc10) from Halobacterium salinarum (strain ATCC 700922 / JCM 11081 / NRC-1) (Halobacterium halobium).